We begin with the raw amino-acid sequence, 449 residues long: Putative tartrate transporter (449 aa).

The next 11 helical transmembrane spans lie at 34 to 54 (IVPF…NIGF), 64 to 84 (GFSS…YFLF), 99 to 119 (IWIA…AFVQ), 130 to 150 (LLGV…SFWF), 156 to 176 (AAVT…GSPI), 194 to 214 (WMFL…LFFL), 259 to 279 (VIAL…LGIW), 292 to 312 (IEVG…MVLW), 336 to 356 (GLAF…LTIV), 367 to 387 (LWSM…IATI), and 414 to 434 (GGLY…LILA).

Belongs to the major facilitator superfamily. Phthalate permease family.

Its subcellular location is the cell membrane. In terms of biological role, component of the tartrate utilization system and may allow entry of tartrate and tartrate dehydrogenase. This chain is Putative tartrate transporter (ttuB), found in Agrobacterium vitis (Rhizobium vitis).